The chain runs to 374 residues: DNA integrity scanning protein DisA (374 aa).

In terms of domain architecture, DAC spans 20–158 (DGLMRASLSA…DGMRRVLEDS (139 aa)). Residues Gly87, Leu105, and 118–122 (TRHRT) each bind ATP.

Belongs to the DisA family. In terms of assembly, homooctamer. Mg(2+) is required as a cofactor.

It catalyses the reaction 2 ATP = 3',3'-c-di-AMP + 2 diphosphate. Functionally, participates in a DNA-damage check-point that is active prior to asymmetric division when DNA is damaged. DisA forms globular foci that rapidly scan along the chromosomes during sporulation, searching for lesions. When a lesion is present, DisA pauses at the lesion site. This triggers a cellular response that culminates in a temporary block in sporulation initiation. In terms of biological role, also has diadenylate cyclase activity, catalyzing the condensation of 2 ATP molecules into cyclic di-AMP (c-di-AMP). c-di-AMP acts as a signaling molecule that couples DNA integrity with progression of sporulation. The rise in c-di-AMP level generated by DisA while scanning the chromosome, operates as a positive signal that advances sporulation; upon encountering a lesion, the DisA focus arrests at the damaged site and halts c-di-AMP synthesis. In Streptomyces avermitilis (strain ATCC 31267 / DSM 46492 / JCM 5070 / NBRC 14893 / NCIMB 12804 / NRRL 8165 / MA-4680), this protein is DNA integrity scanning protein DisA.